We begin with the raw amino-acid sequence, 531 residues long: Transmembrane protein 266 (531 aa).

At 1–102 the chain is on the cytoplasmic side; that stretch reads MALAASFNMT…VFLLSASLNS (102 aa). A helical membrane pass occupies residues 103 to 123; that stretch reads FLVACVILVVILLTLELLIDI. Residues 124-129 lie on the Extracellular side of the membrane; it reads KLLQFS. A helical transmembrane segment spans residues 130–150; that stretch reads SAFQFAGVIHWISLVILSVFF. Residues 151–169 lie on the Cytoplasmic side of the membrane; it reads SETVLRIVVLGIWDYIENK. Residues 170-190 traverse the membrane as a helical segment; it reads IEVFDGAVIILSLAPMVASTV. The Extracellular segment spans residues 191-199; it reads ANGPRSPWD. The helical transmembrane segment at 200 to 220 threads the bilayer; it reads AISLIIMLRIWRVKRVIDAYV. The Cytoplasmic portion of the chain corresponds to 221–531; it reads LPVKLEMEMV…EQKLHRVPEA (311 aa). A coiled-coil region spans residues 231 to 251; that stretch reads IQQYEKAKVIQDEQLERLTQI. The interval 380-477 is disordered; that stretch reads NGTGATSESA…PAGSAQTSPE (98 aa). Polar residues predominate over residues 383-412; it reads GATSESASRSSVTRAQSDSSQTLGSSTDCS. Residues 421–431 are compositionally biased toward pro residues; sequence EPGPSPLPLPP.

As to quaternary structure, homodimer; disulfide-linked.

It localises to the cell membrane. The protein localises to the cell projection. Its subcellular location is the dendrite. The protein resides in the perikaryon. Its function is as follows. Voltage-sensor protein present on the post-synaptic side of glutamatergic mossy fibers and granule cells in the cerebellum. Despite the presence of a voltage-sensor segment, does not form a functional ion channel and its precise role remains unclear. Undergoes both rapid and slow structural rearrangements in response to changes in voltage. Contains a zinc-binding site that can regulate the slow conformational transition. The protein is Transmembrane protein 266 of Macaca fascicularis (Crab-eating macaque).